Here is a 120-residue protein sequence, read N- to C-terminus: Large ribosomal subunit protein uL14 (120 aa).

It belongs to the universal ribosomal protein uL14 family. In terms of assembly, part of the 50S ribosomal subunit. Forms a cluster with proteins L3 and L19. In the 70S ribosome, L14 and L19 interact and together make contacts with the 16S rRNA in bridges B5 and B8.

Binds to 23S rRNA. Forms part of two intersubunit bridges in the 70S ribosome. In Aster yellows witches'-broom phytoplasma (strain AYWB), this protein is Large ribosomal subunit protein uL14.